Reading from the N-terminus, the 104-residue chain is NADH-quinone oxidoreductase subunit K (104 aa).

The next 3 membrane-spanning stretches (helical) occupy residues valine 4–alanine 24, valine 31–phenylalanine 51, and leucine 67–leucine 87.

Belongs to the complex I subunit 4L family. NDH-1 is composed of 14 different subunits. Subunits NuoA, H, J, K, L, M, N constitute the membrane sector of the complex.

The protein localises to the cell membrane. The enzyme catalyses a quinone + NADH + 5 H(+)(in) = a quinol + NAD(+) + 4 H(+)(out). Its function is as follows. NDH-1 shuttles electrons from NADH, via FMN and iron-sulfur (Fe-S) centers, to quinones in the respiratory chain. The immediate electron acceptor for the enzyme in this species is believed to be a menaquinone. Couples the redox reaction to proton translocation (for every two electrons transferred, four hydrogen ions are translocated across the cytoplasmic membrane), and thus conserves the redox energy in a proton gradient. This chain is NADH-quinone oxidoreductase subunit K, found in Bacillus anthracis (strain A0248).